The chain runs to 125 residues: Glycoprotein hormones alpha chain (125 aa).

An N-terminal signal peptide occupies residues 1–30; sequence MVSAVTTMGCMKAAGVSLLLLYFLLNAADS. Cystine bridges form between cysteine 41–cysteine 64, cysteine 44–cysteine 93, cysteine 61–cysteine 114, cysteine 65–cysteine 116, and cysteine 92–cysteine 119. N-linked (GlcNAc...) asparagine glycans are attached at residues asparagine 85 and asparagine 110.

It belongs to the glycoprotein hormones subunit alpha family. In terms of assembly, heterodimer. Glycoprotein hormones are heterodimers composed of a common alpha chain described here and a unique beta chain which confers their biological specificity to the different hormones.

The protein resides in the secreted. Its function is as follows. Shared alpha chain of heterodimeric glycoprotein hormones. These hormones bind specific receptors on target cells that in turn activate downstream signaling pathways. Involved in gametogenesis and steroidogenesis. The chain is Glycoprotein hormones alpha chain (cga) from Fundulus heteroclitus (Killifish).